The sequence spans 250 residues: Aquaporin SIP2-1 (250 aa).

The next 2 membrane-spanning stretches (helical) occupy residues 14–34 and 55–75; these read PWLV…GALV and VALS…TGGA. The NPA 1 motif lies at 78 to 80; the sequence is NPL. Helical transmembrane passes span 95–115, 132–152, 178–200, and 211–231; these read LYLF…ILGV, SVGV…VVIV, FHLL…AWAY, and LLVY…VVTL. Positions 191–193 match the NPA 2 motif; that stretch reads NPA.

The protein belongs to the MIP/aquaporin (TC 1.A.8) family. SIP (TC 1.A.8.10) subfamily. Expressed in leaves and anthers, and at lower levels in roots.

Its subcellular location is the membrane. Aquaporins facilitate the transport of water and small neutral solutes across cell membranes. In Oryza sativa subsp. japonica (Rice), this protein is Aquaporin SIP2-1 (SIP2-1).